A 145-amino-acid polypeptide reads, in one-letter code: 3-hydroxyacyl-[acyl-carrier-protein] dehydratase FabZ (145 aa).

Residue histidine 51 is part of the active site.

It belongs to the thioester dehydratase family. FabZ subfamily.

It is found in the cytoplasm. It catalyses the reaction a (3R)-hydroxyacyl-[ACP] = a (2E)-enoyl-[ACP] + H2O. Involved in unsaturated fatty acids biosynthesis. Catalyzes the dehydration of short chain beta-hydroxyacyl-ACPs and long chain saturated and unsaturated beta-hydroxyacyl-ACPs. The chain is 3-hydroxyacyl-[acyl-carrier-protein] dehydratase FabZ from Macrococcus caseolyticus (strain JCSC5402) (Macrococcoides caseolyticum).